The chain runs to 1700 residues: Leucine-rich repeat-containing protein 37A2 (1700 aa).

A signal peptide spans 1–35 (MSSAQCPALVCVMSRLRFWGPWPLLMWQLLWLLVK). The Extracellular segment spans residues 36–1582 (EAQPLEWVKD…VPGYGYTDKL (1547 aa)). A compositionally biased stretch (polar residues) spans 54 to 65 (LGPPDSWSSHSS). 6 disordered regions span residues 54–104 (LGPP…ESTE), 130–156 (QQDL…DPAQ), 169–534 (QLST…AQPP), 559–580 (TEVE…KVVP), 619–642 (PEPT…KHPE), and 729–752 (TKPT…PDLG). Residues 137–160 (LSPQERLPVSPKKLKKDPAQRWSL) form an LRR 1 repeat. Polar residues-rich tracts occupy residues 169–189 (QLST…STDT) and 223–237 (ETQN…QSSS). LRR repeat units follow at residues 230-253 (LEDI…LEEE) and 267-290 (ESSM…EDQA). Over residues 238–249 (LQQEAPAQLPQL) the composition is skewed to low complexity. A glycan (N-linked (GlcNAc...) asparagine) is linked at Asn-296. The span at 307–326 (TITSEPTNETESSQAQQETP) shows a compositional bias: polar residues. Positions 358 to 368 (SEQQQPVQPSE) are enriched in low complexity. Polar residues predominate over residues 433 to 446 (LVHQEATTRLSGSG). A compositionally biased stretch (low complexity) spans 482-493 (SPEPINNENPSP). The span at 729-749 (TKPTTEVKPSPTTEETSTQPP) shows a compositional bias: low complexity. 6 LRR repeats span residues 864–887 (NGTF…VWKA), 888–911 (YSWT…SFEG), 912–935 (LLSL…TFEP), 937–959 (PFLK…TFQA), 963–987 (MQFL…LFKL), and 1002–1027 (LTTL…MACC). N-linked (GlcNAc...) asparagine glycosylation occurs at Asn-1079. The stretch at 1124–1146 (LPYFSAVNLDVKSLLLPFIKLPT) is one LRR 10 repeat. 2 stretches are compositionally biased toward basic and acidic residues: residues 1182-1191 (VGRQSIRREQ) and 1201-1216 (AEEK…EVEQ). 2 disordered regions span residues 1182 to 1227 (VGRQ…EKLA) and 1309 to 1328 (KTRS…PKVR). The helical transmembrane segment at 1583–1603 (ILALIVTGILTILIILFCLIV) threads the bilayer. Residues 1604–1700 (ICCHRRSLQE…TEEEESEALP (97 aa)) are Cytoplasmic-facing. Positions 1675–1685 (NEDKILNRDPG) are enriched in basic and acidic residues. Positions 1675–1700 (NEDKILNRDPGDSEAPTEEEESEALP) are disordered. The span at 1689–1700 (APTEEEESEALP) shows a compositional bias: acidic residues.

Belongs to the LRRC37A family.

The protein resides in the membrane. This chain is Leucine-rich repeat-containing protein 37A2 (LRRC37A2), found in Homo sapiens (Human).